The primary structure comprises 486 residues: Vacuolar-processing enzyme beta-isozyme (486 aa).

The signal sequence occupies residues 1-21; the sequence is MAKSCYFRPALLLLLVLLVHA. H169 is an active-site residue. C211 acts as the Nucleophile in catalysis. A disulfide bridge connects residues C244 and C258. N309 carries an N-linked (GlcNAc...) asparagine glycan. 2 disulfides stabilise this stretch: C420/C450 and C432/C467.

The protein belongs to the peptidase C13 family. Auto-catalytic activation. In terms of tissue distribution, seed specific. Also expressed in the flowers and buds.

It is found in the vacuole. Its subcellular location is the protein storage vacuole. It catalyses the reaction Hydrolysis of proteins and small molecule substrates at -Asn-|-Xaa- bonds.. Asparagine-specific endopeptidase involved in the processing of vacuolar seed protein precursors into the mature forms. Probably involved in post-translational proteolysis of seed storage proteins in the protein storage vacuole of developing seeds. This chain is Vacuolar-processing enzyme beta-isozyme, found in Arabidopsis thaliana (Mouse-ear cress).